Consider the following 221-residue polypeptide: DNA replication complex GINS protein SLD5 (221 aa).

Belongs to the GINS4/SLD5 family. As to quaternary structure, component of the GINS complex which is a heterotetramer of gins1/psf1, gins2/psf2, gins3/psf3 and gins4/sld5. Component of the CMG helicase complex, composed of the mcm2-7 complex, the GINS complex and cdc45.

It localises to the nucleus. It is found in the chromosome. The protein localises to the cytoplasm. In terms of biological role, required for initiation of chromosomal DNA replication. Core component of CDC45-MCM-GINS (CMG) helicase, the molecular machine that unwinds template DNA during replication, and around which the replisome is built. The sequence is that of DNA replication complex GINS protein SLD5 from Xenopus laevis (African clawed frog).